The primary structure comprises 192 residues: Ras-like GTP-binding protein rhoA (192 aa).

A GTP-binding site is contributed by 12-19; the sequence is GDGACGKT. Positions 34–42 match the Effector region motif; the sequence is YVPTVFENY. Residues 59–63 and 117–120 contribute to the GTP site; these read DTAGQ and NKRD. C189 is modified (cysteine methyl ester). C189 carries the S-geranylgeranyl cysteine lipid modification. A propeptide spans 190–192 (removed in mature form); sequence MIL.

It belongs to the small GTPase superfamily. Rho family. As to quaternary structure, may interact with unc-89 (via DN and PH domains). Interacts with bli-3 and memo-1. In larvae and adults, enriched at the tip of the head where the anterior sensory organ is located and in the pharyngeal nerve ring (at protein level). In embryos, enriched at the boundaries of dorsal cells undergoing intercalation, ventral enclosure and elongation.

The protein resides in the cell membrane. Its subcellular location is the cytoplasm. It is found in the cytoskeleton. It localises to the cell cortex. Its activity is regulated as follows. GTP hydrolysis is stimulated by unc-89. Its function is as follows. Required for ventral migration of epidermal cells during ventral enclosure in the embryo and for cell elongation. Also required for ventral migration of P cells during larval development. Involved in asymmetric spindle positioning during anaphase and establishment of cell polarity during embryo development. In adults, involved in regulation of multiple processes including locomotion, pharyngeal pumping, fecundity, ovulation, defecation and body morphology. In body wall muscles, regulates organization of myosin thick filaments downstream of unc-89. Association with the oxidase bli-3 promotes ROS production and this interaction may be modulated by memo-1, in order to control the oxidative stress response and longevity. The protein is Ras-like GTP-binding protein rhoA of Caenorhabditis elegans.